A 327-amino-acid chain; its full sequence is GMP reductase (327 aa).

Cysteine 176 (thioimidate intermediate) is an active-site residue. 205–228 (IIADGGIRTHGDIVKSIRFGATMV) contributes to the NADP(+) binding site.

It belongs to the IMPDH/GMPR family. GuaC type 2 subfamily.

The catalysed reaction is IMP + NH4(+) + NADP(+) = GMP + NADPH + 2 H(+). Catalyzes the irreversible NADPH-dependent deamination of GMP to IMP. It functions in the conversion of nucleobase, nucleoside and nucleotide derivatives of G to A nucleotides, and in maintaining the intracellular balance of A and G nucleotides. This chain is GMP reductase, found in Helicobacter pylori (strain ATCC 700392 / 26695) (Campylobacter pylori).